A 434-amino-acid polypeptide reads, in one-letter code: Chaperone SurA (434 aa).

An N-terminal signal peptide occupies residues 1 to 22; it reads MKKWKSSLLGIAIWSLAASSMA. PpiC domains are found at residues 173-274 and 283-383; these read TVQF…KVND and VTEV…EVLD.

The protein localises to the periplasm. The catalysed reaction is [protein]-peptidylproline (omega=180) = [protein]-peptidylproline (omega=0). In terms of biological role, chaperone involved in the correct folding and assembly of outer membrane proteins. Recognizes specific patterns of aromatic residues and the orientation of their side chains, which are found more frequently in integral outer membrane proteins. May act in both early periplasmic and late outer membrane-associated steps of protein maturation. This Photobacterium profundum (strain SS9) protein is Chaperone SurA.